The following is a 555-amino-acid chain: Glypican-6 (555 aa).

The signal sequence occupies residues 1–23 (MPSWIGAVILPLLGLLLSLPAGA). Residues 348–357 (PALRSARSAP) are compositionally biased toward low complexity. Disordered stretches follow at residues 348-376 (PALR…PTTA) and 480-501 (GNDV…GSGC). The GPI-anchor amidated serine moiety is linked to residue S529. Positions 530–555 (SAAQRGHSLLSWSLTCIVLALQRLCR) are cleaved as a propeptide — removed in mature form.

This sequence belongs to the glypican family. In terms of tissue distribution, widely expressed. High expression in fetal kidney and lung and lower expressions in fetal liver and brain. In adult tissues, very abundant in ovary, high levels also observed in liver, kidney, small intestine and colon. Not detected in peripheral blood leukocytes. Detected in breast cancer cells (at protein level).

The protein localises to the cell membrane. It localises to the secreted. Its subcellular location is the extracellular space. Functionally, cell surface proteoglycan that bears heparan sulfate. Putative cell surface coreceptor for growth factors, extracellular matrix proteins, proteases and anti-proteases. Enhances migration and invasion of cancer cells through WNT5A signaling. The polypeptide is Glypican-6 (GPC6) (Homo sapiens (Human)).